Consider the following 118-residue polypeptide: Probable non-functional immunoglobulin lambda variable 2-33 (118 aa).

The N-terminal stretch at 1-19 is a signal peptide; that stretch reads MAWALLLLTLLTQGTGSWA. The framework-1 stretch occupies residues 20-44; sequence QSALTQPPFVSGAPGQSVTISCTGT. The Ig-like domain maps to 34 to 118; it reads GQSVTISCTG…CSLYSSSYTF (85 aa). Cys41 and Cys109 are disulfide-bonded. The segment at 45–53 is complementarity-determining-1; the sequence is SSDVGDYDH. The tract at residues 54-70 is framework-2; it reads VFWYQKRLSTTSRLLIY. The complementarity-determining-2 stretch occupies residues 71 to 73; that stretch reads NVN. Residues 74–109 form a framework-3 region; the sequence is TRPSGISDLFSGSKSGNMASLTISGLKSEVEANYHC. The segment at 110–118 is complementarity-determining-3; that stretch reads SLYSSSYTF.

Immunoglobulins are composed of two identical heavy chains and two identical light chains; disulfide-linked.

It localises to the secreted. The protein resides in the cell membrane. Its function is as follows. Probable non-functional open reading frame (ORF) of V region of the variable domain of immunoglobulin light chains. Non-functional ORF generally cannot participate in the synthesis of a productive immunoglobulin chain due to altered V-(D)-J or switch recombination and/or splicing site (at mRNA level) and/or conserved amino acid change (protein level). Immunoglobulins, also known as antibodies, are membrane-bound or secreted glycoproteins produced by B lymphocytes. In the recognition phase of humoral immunity, the membrane-bound immunoglobulins serve as receptors which, upon binding of a specific antigen, trigger the clonal expansion and differentiation of B lymphocytes into immunoglobulins-secreting plasma cells. Secreted immunoglobulins mediate the effector phase of humoral immunity, which results in the elimination of bound antigens. The antigen binding site is formed by the variable domain of one heavy chain, together with that of its associated light chain. Thus, each immunoglobulin has two antigen binding sites with remarkable affinity for a particular antigen. The variable domains are assembled by a process called V-(D)-J rearrangement and can then be subjected to somatic hypermutations which, after exposure to antigen and selection, allow affinity maturation for a particular antigen. This is Probable non-functional immunoglobulin lambda variable 2-33 from Homo sapiens (Human).